The primary structure comprises 220 residues: Guanylate kinase (220 aa).

The 180-residue stretch at 15–194 folds into the Guanylate kinase-like domain; sequence GLMLVISSPS…AFEGIEAIVK (180 aa). 22–29 contributes to the ATP binding site; sequence SPSGAGKS.

It belongs to the guanylate kinase family.

It localises to the cytoplasm. The enzyme catalyses GMP + ATP = GDP + ADP. Essential for recycling GMP and indirectly, cGMP. This is Guanylate kinase from Agrobacterium fabrum (strain C58 / ATCC 33970) (Agrobacterium tumefaciens (strain C58)).